Here is a 549-residue protein sequence, read N- to C-terminus: Cytoplasmic trehalase (549 aa).

Residues R168, W175–D176, N212, R221–Q223, R292–E294, and G324 each bind substrate. Residues D326 and E509 each act as proton donor/acceptor in the active site. Residue E525 participates in substrate binding.

The protein belongs to the glycosyl hydrolase 37 family. In terms of assembly, monomer.

It is found in the cytoplasm. The catalysed reaction is alpha,alpha-trehalose + H2O = alpha-D-glucose + beta-D-glucose. Its pathway is glycan degradation; trehalose degradation; D-glucose from alpha,alpha-trehalose: step 1/1. In terms of biological role, hydrolyzes trehalose to glucose. Could be involved, in cells returning to low osmolarity conditions, in the utilization of the accumulated cytoplasmic trehalose, which was synthesized in response to high osmolarity. The sequence is that of Cytoplasmic trehalase from Escherichia coli (strain 55989 / EAEC).